The sequence spans 575 residues: Centrosomal protein POC5 (575 aa).

The disordered stretch occupies residues methionine 1–asparagine 26. A phosphoserine mark is found at serine 105 and serine 109. A Centrin-binding (CBR) 1 repeat occupies histidine 142 to asparagine 173. Positions methionine 191–glutamate 222 form a coiled coil. Centrin-binding (CBR) repeat units lie at residues valine 231 to alanine 262 and arginine 263 to glutamine 295. Residues serine 316 to phenylalanine 355 adopt a coiled-coil conformation. 2 disordered regions span residues alanine 376 to proline 411 and lysine 538 to aspartate 575. Over residues asparagine 382–histidine 400 the composition is skewed to basic and acidic residues. The residue at position 538 (lysine 538) is an N6-acetyllysine. Residues proline 545–histidine 569 show a composition bias toward polar residues. Residue serine 564 is modified to Phosphoserine.

The protein belongs to the POC5 family. Interacts with CETN2 and CETN3. Forms a microtubule-associated complex with POC1B, CETN2 and FAM161A. Interacts with CCDC15. In terms of processing, hyperphosphorylated during recruitment to procentrioles in G2/M phase.

Its subcellular location is the cytoplasm. It localises to the cytoskeleton. The protein resides in the microtubule organizing center. It is found in the centrosome. The protein localises to the centriole. Functionally, essential for the assembly of the distal half of centrioles, required for centriole elongation. Acts as a negative regulator of centriole elongation. This chain is Centrosomal protein POC5 (POC5), found in Homo sapiens (Human).